A 256-amino-acid polypeptide reads, in one-letter code: Ribosomal RNA large subunit methyltransferase E (256 aa).

S-adenosyl-L-methionine-binding residues include Gly50, Trp52, Asp69, Asp85, and Asp108. The Proton acceptor role is filled by Lys148. Positions 195-253 constitute a TRAM domain; that stretch reads SLRKGDVVDVTIDAMGKTGDGIAHVDDFVVFVKGGSVGDKLKIKITDVKPSFAFADIVE.

It belongs to the class I-like SAM-binding methyltransferase superfamily. RNA methyltransferase RlmE family.

It is found in the cytoplasm. It catalyses the reaction uridine(2552) in 23S rRNA + S-adenosyl-L-methionine = 2'-O-methyluridine(2552) in 23S rRNA + S-adenosyl-L-homocysteine + H(+). Specifically methylates the uridine in position 2552 of 23S rRNA at the 2'-O position of the ribose in the fully assembled 50S ribosomal subunit. The sequence is that of Ribosomal RNA large subunit methyltransferase E from Methanocella arvoryzae (strain DSM 22066 / NBRC 105507 / MRE50).